The chain runs to 195 residues: MRQADVTRNTSETKIQISINLDGTGKAELASGVPFLDHMLDQIARHGMIDLKVVAQGDTHIDDHHTVEDVGITLGQAFAKAVGDKAGITRYGHSYVPLDETLSRVVVDFSGRPGLEFNVPFTRARVGDFDVDLSIEFFRGFVNHAGVTLHIDNLRGINAHHQIETVFKAFGRALRMALTVDPRAAGVVPSTKGSL.

Belongs to the imidazoleglycerol-phosphate dehydratase family.

The protein resides in the cytoplasm. The catalysed reaction is D-erythro-1-(imidazol-4-yl)glycerol 3-phosphate = 3-(imidazol-4-yl)-2-oxopropyl phosphate + H2O. The protein operates within amino-acid biosynthesis; L-histidine biosynthesis; L-histidine from 5-phospho-alpha-D-ribose 1-diphosphate: step 6/9. This Polynucleobacter asymbioticus (strain DSM 18221 / CIP 109841 / QLW-P1DMWA-1) (Polynucleobacter necessarius subsp. asymbioticus) protein is Imidazoleglycerol-phosphate dehydratase.